The chain runs to 203 residues: Outer-membrane lipoprotein carrier protein (203 aa).

A signal peptide spans 1–21 (MKKLAITCALLSGMVVSQVWA). The tract at residues 184–203 (DASKFTFTPPKGVTVDDQRK) is disordered.

Belongs to the LolA family. As to quaternary structure, monomer.

The protein localises to the periplasm. In terms of biological role, participates in the translocation of lipoproteins from the inner membrane to the outer membrane. Only forms a complex with a lipoprotein if the residue after the N-terminal Cys is not an aspartate (The Asp acts as a targeting signal to indicate that the lipoprotein should stay in the inner membrane). This is Outer-membrane lipoprotein carrier protein from Klebsiella pneumoniae (strain 342).